Here is a 204-residue protein sequence, read N- to C-terminus: General stress protein Ctc (204 aa).

The disordered stretch occupies residues 177–204; sequence ILPPQQQEAAEVDEEESADAQPEGENEQ. Acidic residues predominate over residues 186-204; that stretch reads AEVDEEESADAQPEGENEQ.

It belongs to the bacterial ribosomal protein bL25 family. CTC subfamily. In terms of assembly, part of the ribosome (presumably the 50S subunit) under heat-stress but not control growth conditions. Binds 5S rRNA.

Functionally, not required for exponential growth; probably functions in vegetatively growing cells, maybe required for accurate translation under stress conditions. This chain is General stress protein Ctc, found in Bacillus subtilis (strain 168).